The sequence spans 83 residues: Pigment-dispersing hormone peptides (83 aa).

The N-terminal stretch at 1–24 is a signal peptide; it reads MRFIILGVLFIAVASMILSNGVMA. Residue Ala-80 is modified to Alanine amide.

Belongs to the arthropod PDH family. As to expression, strongly expressed in eyestalk tissue and cerebral ganglia (at protein level).

The protein resides in the secreted. Functionally, the pigment-dispersing hormone causes the migration of the distal retinal pigment into the proximal end of the pigment chromatophore cells and thus decreases the amount of light entering the retinulas. May also function as a neurotransmitter and/or neuromodulator. This is Pigment-dispersing hormone peptides from Eurydice pulchra (Speckled sea louse).